The following is a 251-amino-acid chain: MKILVSNDDGVLAPGIKILANELSTLGEVKVVAPDRNRSGASNSLTLTQPLRVKQLDNGYYSVDGTPTDCVHLALTGFLEPTDIVVSGINEGANLGDDVLYSGTVAAAMEGRYLGLPAIAISMVGDNIQHYETAAIIAKQLVIKLSANKLPSQTILNVNVPDLPLNQIRGLQVTRLGTRHSAEPIIKEYDPRGRPIYWVGPPGIEADAGAGTDFFAIKTGHVSITPLHLDMTHYKLFDHLSNLLNEICIEN.

4 residues coordinate a divalent metal cation: D8, D9, S39, and N90.

Belongs to the SurE nucleotidase family. A divalent metal cation is required as a cofactor.

The protein resides in the cytoplasm. It catalyses the reaction a ribonucleoside 5'-phosphate + H2O = a ribonucleoside + phosphate. Its function is as follows. Nucleotidase that shows phosphatase activity on nucleoside 5'-monophosphates. This chain is 5'-nucleotidase SurE, found in Legionella pneumophila subsp. pneumophila (strain Philadelphia 1 / ATCC 33152 / DSM 7513).